The primary structure comprises 231 residues: 7-cyano-7-deazaguanine synthase (231 aa).

Phe8–Leu18 contacts ATP. Residues Cys188, Cys197, Cys200, and Cys203 each coordinate Zn(2+).

The protein belongs to the QueC family. Zn(2+) serves as cofactor.

The catalysed reaction is 7-carboxy-7-deazaguanine + NH4(+) + ATP = 7-cyano-7-deazaguanine + ADP + phosphate + H2O + H(+). The protein operates within purine metabolism; 7-cyano-7-deazaguanine biosynthesis. Functionally, catalyzes the ATP-dependent conversion of 7-carboxy-7-deazaguanine (CDG) to 7-cyano-7-deazaguanine (preQ(0)). The protein is 7-cyano-7-deazaguanine synthase of Erwinia tasmaniensis (strain DSM 17950 / CFBP 7177 / CIP 109463 / NCPPB 4357 / Et1/99).